A 101-amino-acid chain; its full sequence is Putative membrane protein insertion efficiency factor (101 aa).

This sequence belongs to the UPF0161 family.

The protein resides in the cell inner membrane. Functionally, could be involved in insertion of integral membrane proteins into the membrane. The protein is Putative membrane protein insertion efficiency factor of Methylobacterium sp. (strain 4-46).